We begin with the raw amino-acid sequence, 218 residues long: Ras-related protein Rab11D (218 aa).

20–27 contacts GTP; the sequence is GDSGVGKS. The Effector region signature appears at 42 to 50; the sequence is SKSTIGVEF. GTP contacts are provided by residues 68-72 and 126-129; these read DTAGQ and NKSD. Residues C215 and C216 are each lipidated (S-geranylgeranyl cysteine).

This sequence belongs to the small GTPase superfamily. Rab family.

Its subcellular location is the cell membrane. This chain is Ras-related protein Rab11D (RAB11D), found in Lotus japonicus (Lotus corniculatus var. japonicus).